We begin with the raw amino-acid sequence, 262 residues long: 3-deoxy-manno-octulosonate cytidylyltransferase (262 aa).

This sequence belongs to the KdsB family.

The protein resides in the cytoplasm. The enzyme catalyses 3-deoxy-alpha-D-manno-oct-2-ulosonate + CTP = CMP-3-deoxy-beta-D-manno-octulosonate + diphosphate. It functions in the pathway nucleotide-sugar biosynthesis; CMP-3-deoxy-D-manno-octulosonate biosynthesis; CMP-3-deoxy-D-manno-octulosonate from 3-deoxy-D-manno-octulosonate and CTP: step 1/1. Its pathway is bacterial outer membrane biogenesis; lipopolysaccharide biosynthesis. Functionally, activates KDO (a required 8-carbon sugar) for incorporation into bacterial lipopolysaccharide in Gram-negative bacteria. The protein is 3-deoxy-manno-octulosonate cytidylyltransferase of Blochmanniella pennsylvanica (strain BPEN).